The following is a 105-amino-acid chain: UPF0148 protein PYRAB12700 (105 aa).

This sequence belongs to the UPF0148 family.

This is UPF0148 protein PYRAB12700 from Pyrococcus abyssi (strain GE5 / Orsay).